The primary structure comprises 444 residues: Protein kinase C and casein kinase substrate in neurons protein 1 (444 aa).

Ser2 and Ser79 each carry phosphoserine. An F-BAR domain is found at 13–283 (EETTDSFWEV…AIRGADAQED (271 aa)). Residues 26 to 275 (KRTVKRIDDG…HVYRELEQAI (250 aa)) are a coiled coil. 2 disordered regions span residues 173-194 (REMN…LQDK) and 309-386 (LPHT…DDSK). Thr184 is subject to Phosphothreonine. Positions 314 to 324 (TKKEKQPKKAE) are enriched in basic and acidic residues. Over residues 329-351 (TNATGAVESTSQAGDRGSVSSYD) the composition is skewed to polar residues. 5 positions are modified to phosphoserine: Ser346, Ser348, Ser349, Ser361, and Ser365. The 60-residue stretch at 385-444 (SKGVRVRALYDYDGQEQDELSFKAGDELTKLGEEDEQGWCRGRLDSGQLGLYPANYVEAI) folds into the SH3 domain. At Tyr394 the chain carries Phosphotyrosine. Phosphoserine occurs at positions 405 and 430.

This sequence belongs to the PACSIN family. As to quaternary structure, homodimer. May form heterooligomers with other PACSINs. Interacts with both COBL and DBNL. Identified in a complex composed of COBL, PACSIN1 and WASL. Interacts (via SH3 domain) with SYNJ1 and WASL. Interacts (via SH3 domain) with DNM1; the interaction is reduced by DNM1 phosphorylation. Interacts with DNM2 and DNM3. Interacts with MAPT. Interacts with EHD1 and EHD3. Interacts with TRPV4. In terms of processing, phosphorylated by casein kinase 2 (CK2) and protein kinase C (PKC).

It is found in the cytoplasm. Its subcellular location is the cell projection. The protein localises to the synapse. The protein resides in the synaptosome. It localises to the ruffle membrane. It is found in the membrane. Its subcellular location is the cytoplasmic vesicle membrane. The protein localises to the cytosol. The protein resides in the cell membrane. Its function is as follows. Binds to membranes via its F-BAR domain and mediates membrane tubulation. Plays a role in the reorganization of the microtubule cytoskeleton via its interaction with MAPT; this decreases microtubule stability and inhibits MAPT-induced microtubule polymerization. Plays a role in cellular transport processes by recruiting DNM1, DNM2 and DNM3 to membranes. Plays a role in the reorganization of the actin cytoskeleton and in neuron morphogenesis via its interaction with COBL and WASL, and by recruiting COBL to the cell cortex. Plays a role in the regulation of neurite formation, neurite branching and the regulation of neurite length. Required for normal synaptic vesicle endocytosis; this process retrieves previously released neurotransmitters to accommodate multiple cycles of neurotransmission. Required for normal excitatory and inhibitory synaptic transmission. The polypeptide is Protein kinase C and casein kinase substrate in neurons protein 1 (Pacsin1) (Pongo abelii (Sumatran orangutan)).